A 285-amino-acid chain; its full sequence is Probable E3 ubiquitin-protein ligase IE1 (285 aa).

Over 1–201 the chain is Cytoplasmic; that stretch reads MASKDSDVRC…LPGYWDRDDR (201 aa). The RING-CH-type zinc-finger motif lies at 124–183; sequence SIDEEGKQCWICRDGESLPEARYCNCYGDLQYCHEECLKTWISMSGEKKCKFCQTPYKVN. Residues C132, C135, C147, C149, H157, C160, C173, and C176 each coordinate Zn(2+). The chain crosses the membrane as a helical span at residues 202–222; that stretch reads FVFIAGFIGMGTILAGWIASF. At 223-238 the chain is on the extracellular side; the sequence is FYLLVVLCGKYFTYKD. The helical transmembrane segment at 239–259 threads the bilayer; the sequence is VMIVVGGLAIIQVVGLMFSLF. The Cytoplasmic portion of the chain corresponds to 260–285; it reads MYFQIGNLLRQYINYMTETNIDPLRT.

It localises to the membrane. It carries out the reaction S-ubiquitinyl-[E2 ubiquitin-conjugating enzyme]-L-cysteine + [acceptor protein]-L-lysine = [E2 ubiquitin-conjugating enzyme]-L-cysteine + N(6)-ubiquitinyl-[acceptor protein]-L-lysine.. It functions in the pathway protein modification; protein ubiquitination. In terms of biological role, controls the expression of later classes of genes and also of the IE genes (Potential). E3 ubiquitin-protein ligase. E3 ubiquitin ligases accept ubiquitin from an E2 ubiquitin-conjugating enzyme in the form of a thioester and then directly transfer the ubiquitin to targeted substrates. This is Probable E3 ubiquitin-protein ligase IE1 (IE1) from Bovine herpesvirus 4 (strain DN-599) (BoHV-4).